Here is a 759-residue protein sequence, read N- to C-terminus: Arylphorin subunit C223 (759 aa).

Positions 1-15 (MKIAIVLLAIVGLAA) are cleaved as a signal peptide.

This sequence belongs to the hemocyanin family. Heterohexamer. As to expression, fat body.

The protein resides in the secreted. Its subcellular location is the extracellular space. Functionally, arylphorin is a larval storage protein (LSP) which may serve as a storage protein used primarily as a source of aromatic amino acids for protein synthesis during metamorphosis. It is a constituent of the sclerotizing system of the cuticle, and serves as a carrier for ecdysteroid hormone. The polypeptide is Arylphorin subunit C223 (Calliphora vicina (Blue blowfly)).